The following is a 150-amino-acid chain: Deoxyuridine 5'-triphosphate nucleotidohydrolase (150 aa).

Residues 69–71, asparagine 82, 86–88, and lysine 96 contribute to the substrate site; these read RSG and LID.

It belongs to the dUTPase family. Mg(2+) serves as cofactor.

It catalyses the reaction dUTP + H2O = dUMP + diphosphate + H(+). It functions in the pathway pyrimidine metabolism; dUMP biosynthesis; dUMP from dCTP (dUTP route): step 2/2. This enzyme is involved in nucleotide metabolism: it produces dUMP, the immediate precursor of thymidine nucleotides and it decreases the intracellular concentration of dUTP so that uracil cannot be incorporated into DNA. This Neisseria gonorrhoeae (strain ATCC 700825 / FA 1090) protein is Deoxyuridine 5'-triphosphate nucleotidohydrolase.